We begin with the raw amino-acid sequence, 355 residues long: Protein RecA (355 aa).

An ATP-binding site is contributed by glycine 66–threonine 73. Residues aspartate 331 to glutamate 355 are disordered. Residues valine 332 to glutamine 344 are compositionally biased toward acidic residues.

Belongs to the RecA family.

Its subcellular location is the cytoplasm. Its function is as follows. Can catalyze the hydrolysis of ATP in the presence of single-stranded DNA, the ATP-dependent uptake of single-stranded DNA by duplex DNA, and the ATP-dependent hybridization of homologous single-stranded DNAs. It interacts with LexA causing its activation and leading to its autocatalytic cleavage. This is Protein RecA from Latilactobacillus sakei subsp. sakei (strain 23K) (Lactobacillus sakei subsp. sakei).